The primary structure comprises 423 residues: Putative competence-damage inducible protein (423 aa).

Belongs to the CinA family.

This Streptococcus equi subsp. zooepidemicus (strain H70) protein is Putative competence-damage inducible protein.